We begin with the raw amino-acid sequence, 523 residues long: 2-isopropylmalate synthase (523 aa).

In terms of domain architecture, Pyruvate carboxyltransferase spans 5–267 (VIIFDTTLRD…HTAINHQEIW (263 aa)). Aspartate 14, histidine 202, histidine 204, and asparagine 238 together coordinate Mn(2+). The interval 392 to 523 (RLDYFSVQSG…QHNENNKETV (132 aa)) is regulatory domain.

The protein belongs to the alpha-IPM synthase/homocitrate synthase family. LeuA type 1 subfamily. In terms of assembly, homodimer. It depends on Mn(2+) as a cofactor.

Its subcellular location is the cytoplasm. The catalysed reaction is 3-methyl-2-oxobutanoate + acetyl-CoA + H2O = (2S)-2-isopropylmalate + CoA + H(+). The protein operates within amino-acid biosynthesis; L-leucine biosynthesis; L-leucine from 3-methyl-2-oxobutanoate: step 1/4. Functionally, catalyzes the condensation of the acetyl group of acetyl-CoA with 3-methyl-2-oxobutanoate (2-ketoisovalerate) to form 3-carboxy-3-hydroxy-4-methylpentanoate (2-isopropylmalate). The polypeptide is 2-isopropylmalate synthase (Shigella flexneri serotype 5b (strain 8401)).